A 352-amino-acid polypeptide reads, in one-letter code: N-acetyl-gamma-glutamyl-phosphate reductase (352 aa).

Cys155 is an active-site residue.

This sequence belongs to the NAGSA dehydrogenase family. Type 1 subfamily.

Its subcellular location is the cytoplasm. The enzyme catalyses N-acetyl-L-glutamate 5-semialdehyde + phosphate + NADP(+) = N-acetyl-L-glutamyl 5-phosphate + NADPH + H(+). It participates in amino-acid biosynthesis; L-arginine biosynthesis; N(2)-acetyl-L-ornithine from L-glutamate: step 3/4. Catalyzes the NADPH-dependent reduction of N-acetyl-5-glutamyl phosphate to yield N-acetyl-L-glutamate 5-semialdehyde. This is N-acetyl-gamma-glutamyl-phosphate reductase from Picosynechococcus sp. (strain ATCC 27264 / PCC 7002 / PR-6) (Agmenellum quadruplicatum).